We begin with the raw amino-acid sequence, 421 residues long: D-inositol 3-phosphate glycosyltransferase (421 aa).

His-9 contacts 1D-myo-inositol 3-phosphate. Residues 15–16 and Gly-23 each bind UDP-N-acetyl-alpha-D-glucosamine; that span reads QP. 1D-myo-inositol 3-phosphate is bound by residues 20-25, Lys-78, Tyr-110, Thr-134, and Arg-154; that span reads DAGGMN. UDP-N-acetyl-alpha-D-glucosamine contacts are provided by Arg-231, Lys-236, and Arg-294. Mg(2+) contacts are provided by Tyr-303, Gln-304, and Ala-306. 2 residues coordinate UDP-N-acetyl-alpha-D-glucosamine: Glu-316 and Glu-324. Thr-330 is a Mg(2+) binding site.

Belongs to the glycosyltransferase group 1 family. MshA subfamily. Homodimer.

It catalyses the reaction 1D-myo-inositol 3-phosphate + UDP-N-acetyl-alpha-D-glucosamine = 1D-myo-inositol 2-acetamido-2-deoxy-alpha-D-glucopyranoside 3-phosphate + UDP + H(+). Catalyzes the transfer of a N-acetyl-glucosamine moiety to 1D-myo-inositol 3-phosphate to produce 1D-myo-inositol 2-acetamido-2-deoxy-glucopyranoside 3-phosphate in the mycothiol biosynthesis pathway. The chain is D-inositol 3-phosphate glycosyltransferase from Corynebacterium aurimucosum (strain ATCC 700975 / DSM 44827 / CIP 107346 / CN-1) (Corynebacterium nigricans).